We begin with the raw amino-acid sequence, 335 residues long: MERIIEIEKMELEEAEEVSLRPSGWDDYIGQEKIKRNLGVFIEAAKRRGEGLDHILFFGPPGLGKTTLAHIISHEMGANIKVTTAPMIEKAGDLAAILTNLSEGDILFIDEIHRLSASIEEILYPAMEDFRLDIIIGSGPAAQTVKIDLPRFTLIGATTRAGMISKPLRERFGMNFWMQFYNIEELSQIITLASIKLKKRCLLESAKEIARRSRGTPRVALRLLRRVRDFAEVANEEEIKIEQARYALHELGVNDHGFDDLDLRYLRILVQSKGRPVGLGTIAAAMSEDEGTIEDVVEPYLLAHGYLERTARGRVATRQTYELFSLPFEPNATLF.

Residues 1–181 are large ATPase domain (RuvB-L); that stretch reads MERIIEIEKM…FGMNFWMQFY (181 aa). Residues L20, R21, G62, K65, T66, T67, 128 to 130, R171, Y181, and R218 each bind ATP; that span reads EDF. Mg(2+) is bound at residue T66. Residues 182–252 are small ATPAse domain (RuvB-S); that stretch reads NIEELSQIIT…QARYALHELG (71 aa). The tract at residues 255–335 is head domain (RuvB-H); that stretch reads DHGFDDLDLR…LPFEPNATLF (81 aa). 2 residues coordinate DNA: R309 and R314.

The protein belongs to the RuvB family. Homohexamer. Forms an RuvA(8)-RuvB(12)-Holliday junction (HJ) complex. HJ DNA is sandwiched between 2 RuvA tetramers; dsDNA enters through RuvA and exits via RuvB. An RuvB hexamer assembles on each DNA strand where it exits the tetramer. Each RuvB hexamer is contacted by two RuvA subunits (via domain III) on 2 adjacent RuvB subunits; this complex drives branch migration. In the full resolvosome a probable DNA-RuvA(4)-RuvB(12)-RuvC(2) complex forms which resolves the HJ.

It is found in the cytoplasm. It catalyses the reaction ATP + H2O = ADP + phosphate + H(+). Functionally, the RuvA-RuvB-RuvC complex processes Holliday junction (HJ) DNA during genetic recombination and DNA repair, while the RuvA-RuvB complex plays an important role in the rescue of blocked DNA replication forks via replication fork reversal (RFR). RuvA specifically binds to HJ cruciform DNA, conferring on it an open structure. The RuvB hexamer acts as an ATP-dependent pump, pulling dsDNA into and through the RuvAB complex. RuvB forms 2 homohexamers on either side of HJ DNA bound by 1 or 2 RuvA tetramers; 4 subunits per hexamer contact DNA at a time. Coordinated motions by a converter formed by DNA-disengaged RuvB subunits stimulates ATP hydrolysis and nucleotide exchange. Immobilization of the converter enables RuvB to convert the ATP-contained energy into a lever motion, pulling 2 nucleotides of DNA out of the RuvA tetramer per ATP hydrolyzed, thus driving DNA branch migration. The RuvB motors rotate together with the DNA substrate, which together with the progressing nucleotide cycle form the mechanistic basis for DNA recombination by continuous HJ branch migration. Branch migration allows RuvC to scan DNA until it finds its consensus sequence, where it cleaves and resolves cruciform DNA. This Wolinella succinogenes (strain ATCC 29543 / DSM 1740 / CCUG 13145 / JCM 31913 / LMG 7466 / NCTC 11488 / FDC 602W) (Vibrio succinogenes) protein is Holliday junction branch migration complex subunit RuvB.